Consider the following 283-residue polypeptide: Pantothenate synthetase (283 aa).

30–37 (MGNLHDGH) lines the ATP pocket. H37 functions as the Proton donor in the catalytic mechanism. Q61 is a (R)-pantoate binding site. Position 61 (Q61) interacts with beta-alanine. 149–152 (GEKD) provides a ligand contact to ATP. Q155 is a binding site for (R)-pantoate. 186 to 189 (LSSR) contacts ATP.

Belongs to the pantothenate synthetase family. As to quaternary structure, homodimer.

It localises to the cytoplasm. The enzyme catalyses (R)-pantoate + beta-alanine + ATP = (R)-pantothenate + AMP + diphosphate + H(+). It participates in cofactor biosynthesis; (R)-pantothenate biosynthesis; (R)-pantothenate from (R)-pantoate and beta-alanine: step 1/1. Catalyzes the condensation of pantoate with beta-alanine in an ATP-dependent reaction via a pantoyl-adenylate intermediate. The protein is Pantothenate synthetase of Escherichia coli O6:K15:H31 (strain 536 / UPEC).